The sequence spans 335 residues: Glycerol-3-phosphate dehydrogenase [NAD(P)+] (335 aa).

NADPH contacts are provided by Ser-10, Phe-11, Arg-31, and Lys-105. Sn-glycerol 3-phosphate contacts are provided by Lys-105, Gly-136, and Ser-138. Ala-140 serves as a coordination point for NADPH. Residues Lys-191, Asp-244, Ser-254, Arg-255, and Asn-256 each coordinate sn-glycerol 3-phosphate. The active-site Proton acceptor is Lys-191. Arg-255 contacts NADPH. NADPH-binding residues include Val-279 and Glu-281.

It belongs to the NAD-dependent glycerol-3-phosphate dehydrogenase family.

The protein resides in the cytoplasm. The enzyme catalyses sn-glycerol 3-phosphate + NAD(+) = dihydroxyacetone phosphate + NADH + H(+). The catalysed reaction is sn-glycerol 3-phosphate + NADP(+) = dihydroxyacetone phosphate + NADPH + H(+). It functions in the pathway membrane lipid metabolism; glycerophospholipid metabolism. Functionally, catalyzes the reduction of the glycolytic intermediate dihydroxyacetone phosphate (DHAP) to sn-glycerol 3-phosphate (G3P), the key precursor for phospholipid synthesis. The protein is Glycerol-3-phosphate dehydrogenase [NAD(P)+] of Leptospira borgpetersenii serovar Hardjo-bovis (strain JB197).